Here is a 92-residue protein sequence, read N- to C-terminus: Elongation factor 1-beta (92 aa).

The protein belongs to the EF-1-beta/EF-1-delta family.

In terms of biological role, promotes the exchange of GDP for GTP in EF-1-alpha/GDP, thus allowing the regeneration of EF-1-alpha/GTP that could then be used to form the ternary complex EF-1-alpha/GTP/AAtRNA. The chain is Elongation factor 1-beta from Korarchaeum cryptofilum (strain OPF8).